The primary structure comprises 264 residues: Apolipoprotein A-I (264 aa).

A signal peptide spans 1–18; that stretch reads MKAVVLTVAVLFLTGSQA. 2 consecutive repeat copies span residues 67–88 and 89–110. The segment at 67 to 264 is 10 X approximate tandem repeats; that stretch reads LKLLDNWDTL…DDAAKKLSSQ (198 aa). Met109 carries the methionine sulfoxide modification. One copy of the 3; half-length repeat lies at 111 to 121; the sequence is KDLEEVKQKVQ. 3 repeat units span residues 122–143, 144–165, and 166–187. Residues 188–207 form a 7; truncated repeat; it reads PYSDKMRERLAERLTALKDS. Residue Met193 is modified to Methionine sulfoxide. The stretch at 208-229 is repeat 8; the sequence is ASFAEYHAKASEHLKTLREKAK. One copy of the 9; half-length repeat lies at 230 to 240; the sequence is PAIEDLGQGLL. Repeat 10 spans residues 241-264; the sequence is PVLENLKASFLSAIDDAAKKLSSQ.

It belongs to the apolipoprotein A1/A4/E family. In terms of assembly, homodimer. Interacts with APOA1BP and CLU. Component of a sperm activating protein complex (SPAP), consisting of APOA1, an immunoglobulin heavy chain, an immunoglobulin light chain and albumin. Interacts with NDRG1. Interacts with SCGB3A2. Interacts with NAXE and YJEFN3. Glycosylated. Post-translationally, palmitoylated. In terms of processing, phosphorylation sites are present in the extracellular medium.

It is found in the secreted. In terms of biological role, participates in the reverse transport of cholesterol from tissues to the liver for excretion by promoting cholesterol efflux from tissues and by acting as a cofactor for the lecithin cholesterol acyltransferase (LCAT). As part of the SPAP complex, activates spermatozoa motility. This chain is Apolipoprotein A-I (APOA1), found in Castor canadensis (American beaver).